Reading from the N-terminus, the 233-residue chain is Purine nucleoside phosphorylase DeoD-type (233 aa).

A purine D-ribonucleoside is bound at residue His4. Phosphate is bound by residues Gly20, Arg24, Arg43, and Arg87–Thr90. Residues Glu162, Glu179–Glu181, and Ser203–Asp204 each bind a purine D-ribonucleoside. Residue Asp204 is the Proton donor of the active site.

This sequence belongs to the PNP/UDP phosphorylase family. Homohexamer; trimer of homodimers.

The catalysed reaction is a purine D-ribonucleoside + phosphate = a purine nucleobase + alpha-D-ribose 1-phosphate. The enzyme catalyses a purine 2'-deoxy-D-ribonucleoside + phosphate = a purine nucleobase + 2-deoxy-alpha-D-ribose 1-phosphate. Functionally, catalyzes the reversible phosphorolytic breakdown of the N-glycosidic bond in the beta-(deoxy)ribonucleoside molecules, with the formation of the corresponding free purine bases and pentose-1-phosphate. This is Purine nucleoside phosphorylase DeoD-type from Alkaliphilus metalliredigens (strain QYMF).